A 483-amino-acid polypeptide reads, in one-letter code: MELDKMDENDWKYHGEGNKSIVVSHLRHCQVLRLLKVPSEDSAHTRQTAEQTLRHILNIMDYSKHVMKPLLGEKYVHSGEVVRLPLDFLRQMSLKVQQERPELRCDKVMDTFSGCGLCLPDLTQLPLHHLRDHRPPICVEIKPKCGFLPFSRHMTKECKWKVCRFCMHQHYKLANGKWKRLSRYCPLDLFSGSKQRMYVALKNLLEEPQNNLKIFKGGELIFSCKDDAKQQPDLNNLIQHLRPYFPHTNGLYNGHQPGKVILNEFIQVICSALLSGGDSNRSGEPRKMHLSESKPHCEASPFPRDLIRNGHHGLPKDSVLAKILQVQMLDNLDIEGIYPLYKRVEQYLEEFPKERIRLQIDGPYDESFMDTVKSCLNEDDGSVEYAIGKVHQYRVAMTAKDCSVMITFAPCEEDEEHKLNLEKPRFTYSVSILDLDTKPYEGIPHQYKLDSKIVNYYLRSTQAPPPSSLYKERQECTLLFHAV.

The EXKPK motif signature appears at E140–K144. Residues S279 to E298 form a disordered region. Over residues R281–C297 the composition is skewed to basic and acidic residues.

This sequence belongs to the IPK1 type 2 family. Expressed both maternally and zygotically. Expressed in cleavage-stage embryos. Ubiquitously distributed throughout blastula stages of embryogenesis. At the onset of gastrulation, it is enriched in cells around the blastoderm margin. At shield stage, expression is detected in the deep involuted cells that contribute to mesendoderm. During mid and late gastrula stages, it is strongly expressed in axial mesendoderm. However, it is not present in the nascent tailbud at yolk plug closure (YPC) stage. Expression in axial mesendoderm is reduced at the 2 somite stage (SS). At 6 SS, it is expressed in cells surrounding Kupffer's vesicle, but apparently not within. By 10 SS, it is no longer detected as a specific signal above background.

It is found in the cytoplasm. The protein resides in the nucleus. It carries out the reaction 1D-myo-inositol 1,3,4,5,6-pentakisphosphate + ATP = 1D-myo-inositol hexakisphosphate + ADP + H(+). Its function is as follows. Phosphorylates Ins(1,3,4,5,6)P5 at position 2 to form Ins(1,2,3,4,5,6)P6 (InsP6 or phytate). InsP6 is involved in many processes such as mRNA export, non-homologous end-joining, endocytosis and ion channel regulation. InsP6 also acts as a key regulator of left-right asymmetry in embryo, probably by regulating asymmetric Ca(2+) during left-right specification. The sequence is that of Inositol-pentakisphosphate 2-kinase (ippk) from Danio rerio (Zebrafish).